Reading from the N-terminus, the 246-residue chain is Ribonuclease PH (246 aa).

The interval 1–33 (MTPPKLPVREGRDALTPRPVSVQRGVNPHAPGS) is disordered. Residues arginine 90 and 128–130 (GTR) contribute to the phosphate site.

Belongs to the RNase PH family. As to quaternary structure, homohexameric ring arranged as a trimer of dimers.

It catalyses the reaction tRNA(n+1) + phosphate = tRNA(n) + a ribonucleoside 5'-diphosphate. Phosphorolytic 3'-5' exoribonuclease that plays an important role in tRNA 3'-end maturation. Removes nucleotide residues following the 3'-CCA terminus of tRNAs; can also add nucleotides to the ends of RNA molecules by using nucleoside diphosphates as substrates, but this may not be physiologically important. Probably plays a role in initiation of 16S rRNA degradation (leading to ribosome degradation) during starvation. In Deinococcus radiodurans (strain ATCC 13939 / DSM 20539 / JCM 16871 / CCUG 27074 / LMG 4051 / NBRC 15346 / NCIMB 9279 / VKM B-1422 / R1), this protein is Ribonuclease PH.